Reading from the N-terminus, the 751-residue chain is Catalase-peroxidase (751 aa).

A disordered region spans residues Met-1–Asp-21. A cross-link (tryptophyl-tyrosyl-methioninium (Trp-Tyr) (with M-270)) is located at residues Trp-90 to Tyr-244. His-91 functions as the Proton acceptor in the catalytic mechanism. The segment at residues Tyr-244–Met-270 is a cross-link (tryptophyl-tyrosyl-methioninium (Tyr-Met) (with W-90)). His-285 lines the heme b pocket. The tract at residues Ala-365–Ala-390 is disordered.

The protein belongs to the peroxidase family. Peroxidase/catalase subfamily. Homodimer or homotetramer. It depends on heme b as a cofactor. Post-translationally, formation of the three residue Trp-Tyr-Met cross-link is important for the catalase, but not the peroxidase activity of the enzyme.

The enzyme catalyses H2O2 + AH2 = A + 2 H2O. It carries out the reaction 2 H2O2 = O2 + 2 H2O. Bifunctional enzyme with both catalase and broad-spectrum peroxidase activity. This Pseudomonas putida (strain GB-1) protein is Catalase-peroxidase.